The chain runs to 415 residues: Transcriptional regulator fogI (415 aa).

The segment at residues 12 to 39 (CNACNESKVRCSQTKPTCARCERNKTTC) is a DNA-binding region (zn(2)-C6 fungal-type). The tract at residues 50 to 153 (DAPPISLSHS…ILSPANLDLP (104 aa)) is disordered. 2 stretches are compositionally biased toward low complexity: residues 80–102 (VHIP…STTT) and 123–135 (QFFA…HQQP).

The protein localises to the nucleus. Its function is as follows. Transcriptional regulator that postively regulates the expression of the gene cluster that mediates the biosynthesis of flavoglaucin and congeners (including aspergin, dihydroauroglaucin and auroglaucin), prenylated salicylaldehyde derivatives carrying a saturated or an unsaturated C-7 side chain. This chain is Transcriptional regulator fogI, found in Aspergillus ruber (strain CBS 135680).